The chain runs to 199 residues: Pneumococcal vaccine antigen A homolog (199 aa).

The protein localises to the cell surface. This is Pneumococcal vaccine antigen A homolog (pvaA) from Streptococcus pyogenes serotype M1.